Reading from the N-terminus, the 65-residue chain is uncharacterized protein (65 aa).

Residues 37–57 traverse the membrane as a helical segment; it reads ILAIMTSVLPVLLIYIIWIFI.

It is found in the cell membrane. This is an uncharacterized protein from Bacillus subtilis (strain 168).